Here is a 463-residue protein sequence, read N- to C-terminus: Fumarate hydratase class II (463 aa).

Substrate is bound by residues 95 to 97, 126 to 129, 136 to 138, and Thr184; these read SGT, HPND, and SSN. His185 functions as the Proton donor/acceptor in the catalytic mechanism. Residue Ser315 is part of the active site. Residues Ser316 and 321-323 each bind substrate; that span reads KIN.

Belongs to the class-II fumarase/aspartase family. Fumarase subfamily. Homotetramer.

Its subcellular location is the cytoplasm. It carries out the reaction (S)-malate = fumarate + H2O. The protein operates within carbohydrate metabolism; tricarboxylic acid cycle; (S)-malate from fumarate: step 1/1. In terms of biological role, involved in the TCA cycle. Catalyzes the stereospecific interconversion of fumarate to L-malate. The sequence is that of Fumarate hydratase class II from Chlamydia muridarum (strain MoPn / Nigg).